The chain runs to 1212 residues: Dermatan-sulfate epimerase-like protein (1212 aa).

A signal peptide spans 1 to 20 (MALMFTGHLLFLALLMFAFS). 4 N-linked (GlcNAc...) asparagine glycosylation sites follow: Asn28, Asn666, Asn688, and Asn709. 2 helical membrane passes run 764–784 (IIFP…CISL) and 803–823 (WILI…WSTC). An N-linked (GlcNAc...) asparagine glycan is attached at Asn874.

Belongs to the dermatan-sulfate isomerase family. As to expression, expressed in different brain areas as well as in multiple other peripheral tissues.

The protein localises to the membrane. In Homo sapiens (Human), this protein is Dermatan-sulfate epimerase-like protein (DSEL).